The primary structure comprises 398 residues: Probable peptidoglycan glycosyltransferase FtsW (398 aa).

Residues M1 to R20 are Cytoplasmic-facing. The helical transmembrane segment at F21 to M41 threads the bilayer. Over V42–S57 the chain is Periplasmic. A helical transmembrane segment spans residues F58–A78. Residues A79–S92 are Cytoplasmic-facing. The helical transmembrane segment at L93–V113 threads the bilayer. Topologically, residues N114–N121 are periplasmic. A helical transmembrane segment spans residues L122–A142. Residues G143–R153 lie on the Cytoplasmic side of the membrane. A helical transmembrane segment spans residues T154–L174. Residues K175–P177 are Periplasmic-facing. Residues D178–A198 form a helical membrane-spanning segment. Residue R199 is a topological domain, cytoplasmic. A helical membrane pass occupies residues L200–T220. Residues A221–G289 lie on the Periplasmic side of the membrane. The helical transmembrane segment at L290–I310 threads the bilayer. Residues G311–G318 lie on the Cytoplasmic side of the membrane. The helical transmembrane segment at N319–I339 threads the bilayer. Topologically, residues N340–L355 are periplasmic. The chain crosses the membrane as a helical span at residues P356–F376. The Cytoplasmic portion of the chain corresponds to R377 to V398.

The protein belongs to the SEDS family. FtsW subfamily.

It localises to the cell inner membrane. The enzyme catalyses [GlcNAc-(1-&gt;4)-Mur2Ac(oyl-L-Ala-gamma-D-Glu-L-Lys-D-Ala-D-Ala)](n)-di-trans,octa-cis-undecaprenyl diphosphate + beta-D-GlcNAc-(1-&gt;4)-Mur2Ac(oyl-L-Ala-gamma-D-Glu-L-Lys-D-Ala-D-Ala)-di-trans,octa-cis-undecaprenyl diphosphate = [GlcNAc-(1-&gt;4)-Mur2Ac(oyl-L-Ala-gamma-D-Glu-L-Lys-D-Ala-D-Ala)](n+1)-di-trans,octa-cis-undecaprenyl diphosphate + di-trans,octa-cis-undecaprenyl diphosphate + H(+). The protein operates within cell wall biogenesis; peptidoglycan biosynthesis. Functionally, peptidoglycan polymerase that is essential for cell division. The chain is Probable peptidoglycan glycosyltransferase FtsW from Methylococcus capsulatus (strain ATCC 33009 / NCIMB 11132 / Bath).